We begin with the raw amino-acid sequence, 273 residues long: Hydroxyethylthiazole kinase (273 aa).

Met-47 contacts substrate. Residues Arg-123 and Thr-172 each coordinate ATP. Gly-199 is a binding site for substrate.

The protein belongs to the Thz kinase family. The cofactor is Mg(2+).

It catalyses the reaction 5-(2-hydroxyethyl)-4-methylthiazole + ATP = 4-methyl-5-(2-phosphooxyethyl)-thiazole + ADP + H(+). Its pathway is cofactor biosynthesis; thiamine diphosphate biosynthesis; 4-methyl-5-(2-phosphoethyl)-thiazole from 5-(2-hydroxyethyl)-4-methylthiazole: step 1/1. Catalyzes the phosphorylation of the hydroxyl group of 4-methyl-5-beta-hydroxyethylthiazole (THZ). This is Hydroxyethylthiazole kinase from Ruminiclostridium cellulolyticum (strain ATCC 35319 / DSM 5812 / JCM 6584 / H10) (Clostridium cellulolyticum).